Reading from the N-terminus, the 199-residue chain is uncharacterized protein (199 aa).

3 helical membrane passes run 22–44, 65–87, and 91–108; these read VVVV…YLFL, TGFI…HLAL, and HTIT…FFFW.

The protein belongs to the ycf1 family.

Its subcellular location is the mitochondrion membrane. This is an uncharacterized protein from Arabidopsis thaliana (Mouse-ear cress).